Consider the following 151-residue polypeptide: MSKDLARNKKAFHDYAILETFEAGIALKGSEVKALRAGRANLKDSFVRIIRGELFLLNAHISYLDTTNSYFRPDERAPRKLLMHRRQIDKLFGKVSTDGLTMVALSLYLNSKNIVKANIALAKGKNLHDKREALKQKEANIEARSALKKYI.

Belongs to the SmpB family.

The protein localises to the cytoplasm. Its function is as follows. Required for rescue of stalled ribosomes mediated by trans-translation. Binds to transfer-messenger RNA (tmRNA), required for stable association of tmRNA with ribosomes. tmRNA and SmpB together mimic tRNA shape, replacing the anticodon stem-loop with SmpB. tmRNA is encoded by the ssrA gene; the 2 termini fold to resemble tRNA(Ala) and it encodes a 'tag peptide', a short internal open reading frame. During trans-translation Ala-aminoacylated tmRNA acts like a tRNA, entering the A-site of stalled ribosomes, displacing the stalled mRNA. The ribosome then switches to translate the ORF on the tmRNA; the nascent peptide is terminated with the 'tag peptide' encoded by the tmRNA and targeted for degradation. The ribosome is freed to recommence translation, which seems to be the essential function of trans-translation. In Campylobacter fetus subsp. fetus (strain 82-40), this protein is SsrA-binding protein.